The primary structure comprises 366 residues: tRNA/tmRNA (uracil-C(5))-methyltransferase (366 aa).

S-adenosyl-L-methionine contacts are provided by Q190, Y218, N223, E239, and D299. Residue C324 is the Nucleophile of the active site. E358 functions as the Proton acceptor in the catalytic mechanism.

The protein belongs to the class I-like SAM-binding methyltransferase superfamily. RNA M5U methyltransferase family. TrmA subfamily.

It catalyses the reaction uridine(54) in tRNA + S-adenosyl-L-methionine = 5-methyluridine(54) in tRNA + S-adenosyl-L-homocysteine + H(+). It carries out the reaction uridine(341) in tmRNA + S-adenosyl-L-methionine = 5-methyluridine(341) in tmRNA + S-adenosyl-L-homocysteine + H(+). Dual-specificity methyltransferase that catalyzes the formation of 5-methyluridine at position 54 (m5U54) in all tRNAs, and that of position 341 (m5U341) in tmRNA (transfer-mRNA). This Enterobacter sp. (strain 638) protein is tRNA/tmRNA (uracil-C(5))-methyltransferase.